The chain runs to 355 residues: Probable tRNA-dihydrouridine synthase 1 (355 aa).

FMN is bound by residues 48-50 and glutamine 102; that span reads PLS. Cysteine 132 functions as the Proton donor in the catalytic mechanism. FMN contacts are provided by residues lysine 171, 232–234, and 256–257; these read NGD and SR.

Belongs to the Dus family. Requires FMN as cofactor.

The enzyme catalyses a 5,6-dihydrouridine in tRNA + NAD(+) = a uridine in tRNA + NADH + H(+). It catalyses the reaction a 5,6-dihydrouridine in tRNA + NADP(+) = a uridine in tRNA + NADPH + H(+). Catalyzes the synthesis of 5,6-dihydrouridine (D), a modified base found in the D-loop of most tRNAs, via the reduction of the C5-C6 double bond in target uridines. The sequence is that of Probable tRNA-dihydrouridine synthase 1 (dus1) from Synechocystis sp. (strain ATCC 27184 / PCC 6803 / Kazusa).